The following is a 470-amino-acid chain: 3-isopropylmalate dehydratase large subunit (470 aa).

The disordered stretch occupies residues 50 to 121 (NVARGCQHRH…PCGRPGAGRH (72 aa)). [4Fe-4S] cluster contacts are provided by Cys349, Cys409, and Cys412.

The protein belongs to the aconitase/IPM isomerase family. LeuC type 1 subfamily. In terms of assembly, heterodimer of LeuC and LeuD. The cofactor is [4Fe-4S] cluster.

It catalyses the reaction (2R,3S)-3-isopropylmalate = (2S)-2-isopropylmalate. It functions in the pathway amino-acid biosynthesis; L-leucine biosynthesis; L-leucine from 3-methyl-2-oxobutanoate: step 2/4. Functionally, catalyzes the isomerization between 2-isopropylmalate and 3-isopropylmalate, via the formation of 2-isopropylmaleate. The chain is 3-isopropylmalate dehydratase large subunit from Azotobacter vinelandii.